Consider the following 1182-residue polypeptide: Myosin IC heavy chain (1182 aa).

The Myosin motor domain maps to 15 to 698; sequence EGLDDMTLLS…MLFSLEETRE (684 aa). 109 to 116 is a binding site for ATP; it reads GESGAGKT. The interval 571 to 593 is actin-binding; that stretch reads AAELVATLMKSTPHYIRTIKPND. In terms of domain architecture, TH1 spans 774–957; it reads RNRFSMISVR…QFHIASGLPA (184 aa). Disordered stretches follow at residues 999–1052 and 1064–1103; these read KPAP…PAPG and SKPL…PAGQ. Positions 1013 to 1042 are enriched in low complexity; that stretch reads KKPAPTAPGGAPMMKKPAPAPGGAPMMKKP. Positions 1081–1092 are enriched in pro residues; the sequence is PTAPGGPAPAGA. The SH3 domain maps to 1123–1182; the sequence is PPPQQYIALYEYDAMQPDELTFKENDVINLIKKVDADWWQGELVRTKQIGMLPSNYVQQI.

The protein belongs to the TRAFAC class myosin-kinesin ATPase superfamily. Myosin family. As to quaternary structure, myosin I heavy chain is single-headed. Dimer of a heavy and a light chain. Inability to self-assemble into filaments.

It is found in the cell projection. Its subcellular location is the lamellipodium. Functionally, myosin is a protein that binds to actin and has ATPase activity that is activated by actin. Involved in the process of phagocytosis and appears to support streaming behavior. In Dictyostelium discoideum (Social amoeba), this protein is Myosin IC heavy chain (myoC).